Consider the following 1122-residue polypeptide: Protein CAF130 (1122 aa).

Residues Met-1 to Asp-24 form a disordered region. The span at Ala-11–Asp-24 shows a compositional bias: polar residues. Ser-1042 bears the Phosphoserine mark.

Subunit of the 1.0 MDa CCR4-NOT core complex that contains CCR4, CAF1, NOT1, NOT2, NOT3, NOT4, NOT5, CAF40 and CAF130. In the complex interacts with NOT1. The core complex probably is part of a less characterized 1.9 MDa CCR4-NOT complex.

It is found in the cytoplasm. Its subcellular location is the nucleus. Functionally, acts as a component of the CCR4-NOT core complex, which in the nucleus seems to be a general transcription factor, and in the cytoplasm the major mRNA deadenylase involved in mRNA turnover. In Saccharomyces cerevisiae (strain ATCC 204508 / S288c) (Baker's yeast), this protein is Protein CAF130 (CAF130).